A 145-amino-acid chain; its full sequence is uncharacterized protein (145 aa).

Residues 63–83 form a helical membrane-spanning segment; that stretch reads FLCLPLFLSFLVANLILWLSF.

Its subcellular location is the mitochondrion membrane. This is an uncharacterized protein from Arabidopsis thaliana (Mouse-ear cress).